Here is a 480-residue protein sequence, read N- to C-terminus: Initiation-specific alpha-1,6-mannosyltransferase (480 aa).

Topologically, residues 1 to 15 are cytoplasmic; it reads MSRKLSHLIATRKSK. A helical; Signal-anchor for type II membrane protein membrane pass occupies residues 16 to 30; the sequence is TIVVTVLLIYSLLTF. At 31-480 the chain is on the lumenal side; sequence HLSNKRLLSQ…EDADKNAGHK (450 aa). The DXD motif signature appears at 187 to 189; that stretch reads DMD. 4 N-linked (GlcNAc...) asparagine glycosylation sites follow: Asn-203, Asn-281, Asn-341, and Asn-393.

The protein belongs to the glycosyltransferase 32 family. Mn(2+) is required as a cofactor. Post-translationally, glycosylated.

Its subcellular location is the endoplasmic reticulum membrane. The protein localises to the golgi apparatus membrane. It carries out the reaction Transfers an alpha-D-mannosyl residue from GDP-mannose into lipid-linked oligosaccharide, forming an alpha-(1-&gt;6)-D-mannosyl-D-mannose linkage.. In terms of biological role, mannosyltransferase involved in outer chain elongation of asparagine-linked oligosaccharides of the type Man(9)GlcNAc(2). Adds the first alpha-1,6-mannose to the Man(8)GlcNAc(2) and Man(9)GlcNAc(2), but not Man(5)GlcNAc(2), endoplasmic reticulum intermediates. Represents the first enzymatic event required for synthesis of outer chain mannose linkages on yeast secretory proteins. Also has the potential to transfer a second alpha-1,6-mannose to the Man(8)GlcNAc(2) core oligosaccharide. In Saccharomyces cerevisiae (strain ATCC 204508 / S288c) (Baker's yeast), this protein is Initiation-specific alpha-1,6-mannosyltransferase.